A 545-amino-acid polypeptide reads, in one-letter code: T-box transcription factor TBX4 (545 aa).

Residues 71-251 (LHEKELWKKF…NNPFAKGFRG (181 aa)) constitute a DNA-binding region (T-box). Residues 479 to 509 (QSQVRERGPSASFPRERGLPQGCERKPPSPH) form a disordered region. Basic and acidic residues predominate over residues 482-505 (VRERGPSASFPRERGLPQGCERKP). Position 507 is a phosphoserine (Ser-507).

It is found in the nucleus. In terms of biological role, transcriptional regulator that has an essential role in the organogenesis of lungs, pelvis, and hindlimbs. This is T-box transcription factor TBX4 (TBX4) from Homo sapiens (Human).